The following is a 150-amino-acid chain: Viral late gene transcription factor 2 (150 aa).

Belongs to the orthopoxvirus VLTF-2/OPG126 family. In terms of assembly, interacts with the late transcription elongation factor VLTF-4/OPG110. Interacts with the late transcription factors VLTF-1/OPG093.

In terms of biological role, acts with RNA polymerase to initiate transcription from late gene promoters. This Monkeypox virus protein is Viral late gene transcription factor 2 (OPG126).